The sequence spans 778 residues: Endonuclease MutS2 (778 aa).

Gly332–Thr339 is a binding site for ATP. A Smr domain is found at Ile703–Lys778.

The protein belongs to the DNA mismatch repair MutS family. MutS2 subfamily. In terms of assembly, homodimer. Binds to stalled ribosomes, contacting rRNA.

In terms of biological role, endonuclease that is involved in the suppression of homologous recombination and thus may have a key role in the control of bacterial genetic diversity. Functionally, acts as a ribosome collision sensor, splitting the ribosome into its 2 subunits. Detects stalled/collided 70S ribosomes which it binds and splits by an ATP-hydrolysis driven conformational change. Acts upstream of the ribosome quality control system (RQC), a ribosome-associated complex that mediates the extraction of incompletely synthesized nascent chains from stalled ribosomes and their subsequent degradation. Probably generates substrates for RQC. The chain is Endonuclease MutS2 from Fusobacterium nucleatum subsp. nucleatum (strain ATCC 25586 / DSM 15643 / BCRC 10681 / CIP 101130 / JCM 8532 / KCTC 2640 / LMG 13131 / VPI 4355).